The sequence spans 373 residues: T-protein (373 aa).

One can recognise a Chorismate mutase domain in the interval 1 to 90 (MVAELTALRD…ESYTSENDKG (90 aa)). The Prephenate/arogenate dehydrogenase domain occupies 99–361 (RPVVIVGGKG…DHAKRFLVES (263 aa)).

It in the C-terminal section; belongs to the prephenate/arogenate dehydrogenase family.

It localises to the cytoplasm. The catalysed reaction is chorismate = prephenate. The enzyme catalyses prephenate + NAD(+) = 3-(4-hydroxyphenyl)pyruvate + CO2 + NADH. It functions in the pathway amino-acid biosynthesis; L-tyrosine biosynthesis; (4-hydroxyphenyl)pyruvate from prephenate (NAD(+) route): step 1/1. Its pathway is metabolic intermediate biosynthesis; prephenate biosynthesis; prephenate from chorismate: step 1/1. This chain is T-protein (tyrA), found in Enterobacter agglomerans (Erwinia herbicola).